A 24-amino-acid chain; its full sequence is Pyruvate kinase (24 aa).

It belongs to the pyruvate kinase family. As to quaternary structure, homotetramer. The cofactor is Mg(2+). Requires K(+) as cofactor.

The catalysed reaction is pyruvate + ATP = phosphoenolpyruvate + ADP + H(+). It participates in carbohydrate degradation; glycolysis; pyruvate from D-glyceraldehyde 3-phosphate: step 5/5. This chain is Pyruvate kinase (pyk), found in Clostridium pasteurianum.